The following is a 485-amino-acid chain: 28S rRNA (uridine-N(3))-methyltransferase (485 aa).

Residues Arg296, Gly318, and Asn347 each contribute to the S-adenosyl-L-methionine site.

This sequence belongs to the class IV-like SAM-binding methyltransferase superfamily.

It localises to the nucleus. The catalysed reaction is uridine in 28S rRNA + S-adenosyl-L-methionine = N(3)-methyluridine in 28S rRNA + S-adenosyl-L-homocysteine + H(+). Functionally, S-adenosyl-L-methionine-dependent methyltransferase that specifically methylates the uridine in position 3485 of 28S rRNA. The protein is 28S rRNA (uridine-N(3))-methyltransferase of Drosophila melanogaster (Fruit fly).